The sequence spans 206 residues: Platelet glycoprotein Ib beta chain (206 aa).

Positions 1–26 (MGSRPRGALSLLLLLLALLSRPASGC) are cleaved as a signal peptide. Intrachain disulfides connect Cys-26–Cys-32 and Cys-30–Cys-39. Residues 27–55 (PAPCSCAGTLVDCGRRGLTWASLPAAFPP) form the LRRNT domain. Residues 27–147 (PAPCSCAGTL…RAACAPGLLC (121 aa)) lie on the Extracellular side of the membrane. The stretch at 60–83 (LVLTGNNLTALPPGLLDALPALRA) is one LRR repeat. N-linked (GlcNAc...) asparagine glycosylation is present at Asn-66. The LRRCT domain occupies 89-143 (NPWRCDCRLLPLRAWLAGRPERAPYRDLRCVAPPALRGRLLPYVAEDELRAACAP). Intrachain disulfides connect Cys-93/Cys-118 and Cys-95/Cys-141. Residues 148 to 172 (WGALVAQLALLVLGLLHALLLALLL) form a helical membrane-spanning segment. Residues 173 to 206 (GRLRRLRARARARSIQEFSLTAPLVAESARGGAS) lie on the Cytoplasmic side of the membrane. Phosphoserine is present on residues Ser-186 and Ser-191. The residue at position 193 (Thr-193) is a Phosphothreonine. The residue at position 200 (Ser-200) is a Phosphoserine.

In terms of assembly, two GP-Ib beta are disulfide-linked to one GP-Ib alpha. GP-IX is complexed with the GP-Ib heterodimer via a non covalent linkage. Interacts with TRAF4.

It localises to the membrane. Its function is as follows. Gp-Ib, a surface membrane protein of platelets, participates in the formation of platelet plugs by binding to von Willebrand factor, which is already bound to the subendothelium. The sequence is that of Platelet glycoprotein Ib beta chain (Gp1bb) from Mus musculus (Mouse).